Here is a 129-residue protein sequence, read N- to C-terminus: RxLR effector protein SFI6 (129 aa).

The signal sequence occupies residues 1–16 (MTLVVLATGLLASGTA). The RxLR-dEER signature appears at 42 to 64 (RFLRSHQITDDKVEINEHGEEER).

The protein belongs to the RxLR effector family.

It is found in the secreted. The protein localises to the host cytoplasm. It localises to the host cell membrane. Functionally, effector that suppresses flg22-induced post-translational MAP kinase activation in tomato but not in Arabidopsis. The perception of highly conserved pathogen- or microbe-associated molecular patterns (PAMPs/MAMPs), such as flg22, triggers converging signaling pathways recruiting MAP kinase cascades and inducing transcriptional re-programming, yielding a generic antimicrobial response. The protein is RxLR effector protein SFI6 of Phytophthora infestans (strain T30-4) (Potato late blight agent).